The sequence spans 87 residues: Large ribosomal subunit protein bL31B (87 aa).

Belongs to the bacterial ribosomal protein bL31 family. Type B subfamily. In terms of assembly, part of the 50S ribosomal subunit.

The chain is Large ribosomal subunit protein bL31B from Escherichia coli O9:H4 (strain HS).